We begin with the raw amino-acid sequence, 95 residues long: Putative septation protein SpoVG (95 aa).

It belongs to the SpoVG family.

Could be involved in septation. This Clostridium botulinum (strain ATCC 19397 / Type A) protein is Putative septation protein SpoVG.